Reading from the N-terminus, the 429-residue chain is Ribosomal RNA small subunit methyltransferase B (429 aa).

S-adenosyl-L-methionine contacts are provided by residues 254–260, Asp-277, Asp-303, and Asp-322; that span reads CAAPGGK. Residue Cys-375 is the Nucleophile of the active site.

The protein belongs to the class I-like SAM-binding methyltransferase superfamily. RsmB/NOP family.

The protein localises to the cytoplasm. It carries out the reaction cytidine(967) in 16S rRNA + S-adenosyl-L-methionine = 5-methylcytidine(967) in 16S rRNA + S-adenosyl-L-homocysteine + H(+). Specifically methylates the cytosine at position 967 (m5C967) of 16S rRNA. In Escherichia coli O157:H7, this protein is Ribosomal RNA small subunit methyltransferase B.